The chain runs to 538 residues: MAENLKRLVSNETLRTLQEKLDFWLKEYNTNTCDQNLNHCLELIEQVAKVQGQLFGILTAAAQEGGRNDGVETIKSRLLPWLEASFTAASLGKSVDSKVPSLQDTFDRERHKDPSPRDRDMQQLDSNLNSTRSQCNQVQDDLVETEKNLEESKNRSAISLLAAEEEINQLKKQLKSLQAQEDARHRNTDQRSSENRRSEPWSLEERKREQWNSLKQNADQQDTEAMSDYKKQLRNLKEEIAVLSAEKSALQGRSSRSRSPSPAPRSRSCSRSRSASPSTAVKVRRPSPNRSKLSNVARKAALLSRFSDSYSQARLDAQCLLRRCIDKAETVQRIIYIATVEAFHVAKMAFRHFKIHVRKSLTPSYVGSNDFENAVLDYVICHLDLYDSQSSVNDVIRAMNVNPKISFPPVVDFCLLSDFIQEICCIAFAMQALEPPLDIAYGADGEVFNDCKYRRSYDSDFTAPLVLYHVWPALMENDCVIMKGEAVTRRGAFWNSVRSVSRCRSRSLSPICPRSQIGLNTMSRSRSPSPIRCGLPRF.

Residues 1-273 (MAENLKRLVS…PRSRSCSRSR (273 aa)) are interaction with YWHAG/14-3-3 protein gamma. Phosphoserine is present on Ser85. Residues 97–137 (SKVPSLQDTFDRERHKDPSPRDRDMQQLDSNLNSTRSQCNQ) form a disordered region. The segment covering 105–122 (TFDRERHKDPSPRDRDMQ) has biased composition (basic and acidic residues). Coiled coils occupy residues 118-187 (DRDM…RHRN) and 219-256 (DQQD…RSSR). Polar residues predominate over residues 123–137 (QLDSNLNSTRSQCNQ). Ser156 and Ser159 each carry phosphoserine. Disordered regions lie at residues 173-226 (QLKS…TEAM) and 247-294 (KSAL…SKLS). The segment covering 181-210 (EDARHRNTDQRSSENRRSEPWSLEERKREQ) has biased composition (basic and acidic residues). The span at 211-224 (WNSLKQNADQQDTE) shows a compositional bias: polar residues. The segment covering 253–278 (RSSRSRSPSPAPRSRSCSRSRSASPS) has biased composition (low complexity). Ser287 and Ser509 each carry phosphoserine.

This sequence belongs to the MIEAP family. Interacts (via coiled-coil domains) with BNIP3L (via BH3 domain). Interacts (via coiled-coil domains) with BNIP3 (via BH3 domain). In terms of assembly, interacts with YWHAG/14-3-3 protein gamma; a protein that also plays a role in MALM.

The protein localises to the cytoplasm. The protein resides in the cytosol. Its subcellular location is the mitochondrion outer membrane. It localises to the mitochondrion matrix. Key regulator of mitochondrial quality that mediates the repairing or degradation of unhealthy mitochondria in response to mitochondrial damage. Mediator of mitochondrial protein catabolic process (also named MALM) by mediating the degradation of damaged proteins inside mitochondria by promoting the accumulation in the mitochondrial matrix of hydrolases that are characteristic of the lysosomal lumen. Also involved in mitochondrion degradation of damaged mitochondria by promoting the formation of vacuole-like structures (named MIV), which engulf and degrade unhealthy mitochondria by accumulating lysosomes. The physical interaction of SPATA18/MIEAP, BNIP3 and BNIP3L/NIX at the mitochondrial outer membrane regulates the opening of a pore in the mitochondrial double membrane in order to mediate the translocation of lysosomal proteins from the cytoplasm to the mitochondrial matrix. Binds cardiolipin. May form molecular condensates (non-membrane-bounded organelles) within mitochondria that compartmentalize and promote cardiolipin metabolism. This chain is Mitochondria-eating protein (SPATA18), found in Homo sapiens (Human).